A 304-amino-acid chain; its full sequence is Lipoprotein signal peptidase (304 aa).

Transmembrane regions (helical) follow at residues 28 to 48 (IKIK…IVFV), 86 to 106 (PAVP…TFIF), and 112 to 132 (LIVL…DRSV). Active-site residues include aspartate 148 and aspartate 163. The chain crosses the membrane as a helical span at residues 163–183 (DICIVTGFALIFLTFVVDIFL).

This sequence belongs to the peptidase A8 family.

Its subcellular location is the cell membrane. It carries out the reaction Release of signal peptides from bacterial membrane prolipoproteins. Hydrolyzes -Xaa-Yaa-Zaa-|-(S,diacylglyceryl)Cys-, in which Xaa is hydrophobic (preferably Leu), and Yaa (Ala or Ser) and Zaa (Gly or Ala) have small, neutral side chains.. Its pathway is protein modification; lipoprotein biosynthesis (signal peptide cleavage). In terms of biological role, this protein specifically catalyzes the removal of signal peptides from prolipoproteins. This chain is Lipoprotein signal peptidase, found in Mycoplasmoides gallisepticum (strain R(low / passage 15 / clone 2)) (Mycoplasma gallisepticum).